The primary structure comprises 480 residues: RNA-binding protein 42 (480 aa).

Positions methionine 1–glycine 30 are disordered. Alanine 2 is subject to N-acetylalanine. Gly residues predominate over residues proline 11–glycine 27. A Phosphoserine modification is found at serine 135. An asymmetric dimethylarginine mark is found at arginine 153, arginine 158, arginine 168, and arginine 181. The tract at residues glutamate 236–arginine 480 is necessary for interaction with HNRNPK. The segment at serine 319–leucine 356 is disordered. Residues glycine 345–leucine 356 are compositionally biased toward basic and acidic residues. Residues phenylalanine 381–tryptophan 459 form the RRM domain.

This sequence belongs to the RRM RBM42 family. As to quaternary structure, interacts with HNRNPK.

Its subcellular location is the nucleus. The protein localises to the cytoplasm. Its function is as follows. Binds (via the RRM domain) to the 3'-untranslated region (UTR) of CDKN1A mRNA. The sequence is that of RNA-binding protein 42 (RBM42) from Homo sapiens (Human).